We begin with the raw amino-acid sequence, 315 residues long: Methionyl-tRNA formyltransferase (315 aa).

Serine 113 to proline 116 is a binding site for (6S)-5,6,7,8-tetrahydrofolate.

Belongs to the Fmt family.

The enzyme catalyses L-methionyl-tRNA(fMet) + (6R)-10-formyltetrahydrofolate = N-formyl-L-methionyl-tRNA(fMet) + (6S)-5,6,7,8-tetrahydrofolate + H(+). Functionally, attaches a formyl group to the free amino group of methionyl-tRNA(fMet). The formyl group appears to play a dual role in the initiator identity of N-formylmethionyl-tRNA by promoting its recognition by IF2 and preventing the misappropriation of this tRNA by the elongation apparatus. The sequence is that of Methionyl-tRNA formyltransferase from Shigella dysenteriae serotype 1 (strain Sd197).